A 309-amino-acid polypeptide reads, in one-letter code: Porphobilinogen deaminase (309 aa).

S-(dipyrrolylmethanemethyl)cysteine is present on cysteine 242.

Belongs to the HMBS family. In terms of assembly, monomer. Dipyrromethane serves as cofactor.

The enzyme catalyses 4 porphobilinogen + H2O = hydroxymethylbilane + 4 NH4(+). Its pathway is porphyrin-containing compound metabolism; protoporphyrin-IX biosynthesis; coproporphyrinogen-III from 5-aminolevulinate: step 2/4. Functionally, tetrapolymerization of the monopyrrole PBG into the hydroxymethylbilane pre-uroporphyrinogen in several discrete steps. This is Porphobilinogen deaminase from Syntrophobacter fumaroxidans (strain DSM 10017 / MPOB).